Reading from the N-terminus, the 358-residue chain is Phenylalanine--tRNA ligase alpha subunit (358 aa).

Residue E258 coordinates Mg(2+).

This sequence belongs to the class-II aminoacyl-tRNA synthetase family. Phe-tRNA synthetase alpha subunit type 1 subfamily. As to quaternary structure, tetramer of two alpha and two beta subunits. The cofactor is Mg(2+).

It is found in the cytoplasm. The catalysed reaction is tRNA(Phe) + L-phenylalanine + ATP = L-phenylalanyl-tRNA(Phe) + AMP + diphosphate + H(+). The polypeptide is Phenylalanine--tRNA ligase alpha subunit (Rhodospirillum rubrum (strain ATCC 11170 / ATH 1.1.1 / DSM 467 / LMG 4362 / NCIMB 8255 / S1)).